A 409-amino-acid polypeptide reads, in one-letter code: L-cysteine:1D-myo-inositol 2-amino-2-deoxy-alpha-D-glucopyranoside ligase (409 aa).

C25 contributes to the Zn(2+) binding site. Residues 25 to 28, T40, and 63 to 65 each bind L-cysteinyl-5'-AMP; these read CGIT and NVT. Positions 27–37 match the 'HIGH' region motif; that stretch reads ITPYDATHIGH. The 'ERGGDP' region signature appears at 179–184; sequence ERGGDP. W219 contacts L-cysteinyl-5'-AMP. C223 contacts Zn(2+). Position 241 to 243 (241 to 243) interacts with L-cysteinyl-5'-AMP; sequence GSD. H248 contributes to the Zn(2+) binding site. Residue V274 coordinates L-cysteinyl-5'-AMP. The 'KMSKS' region signature appears at 280 to 284; it reads KMSKS.

It belongs to the class-I aminoacyl-tRNA synthetase family. MshC subfamily. In terms of assembly, monomer. Zn(2+) serves as cofactor.

It catalyses the reaction 1D-myo-inositol 2-amino-2-deoxy-alpha-D-glucopyranoside + L-cysteine + ATP = 1D-myo-inositol 2-(L-cysteinylamino)-2-deoxy-alpha-D-glucopyranoside + AMP + diphosphate + H(+). Its function is as follows. Catalyzes the ATP-dependent condensation of GlcN-Ins and L-cysteine to form L-Cys-GlcN-Ins. This is L-cysteine:1D-myo-inositol 2-amino-2-deoxy-alpha-D-glucopyranoside ligase from Clavibacter sepedonicus (Clavibacter michiganensis subsp. sepedonicus).